Consider the following 657-residue polypeptide: Matrix metalloproteinase-15 (657 aa).

The first 36 residues, 1 to 36, serve as a signal peptide directing secretion; that stretch reads MGSDRSALGRPGCTGSCLSSRASLLPLLLVLLDCLG. The propeptide occupies 37–127; the sequence is HGTASKDAEV…KANLRRRRKR (91 aa). The Cysteine switch motif lies at 105 to 112; the sequence is PRCGVPDQ. Cys-107 provides a ligand contact to Zn(2+). Residues 128–614 are Extracellular-facing; it reads YTLTGKAWNN…MEEVVRTVNV (487 aa). N-linked (GlcNAc...) asparagine glycosylation is present at Asn-146. His-255 lines the Zn(2+) pocket. Residue Glu-256 is part of the active site. His-259 and His-265 together coordinate Zn(2+). Residues 295-365 form a disordered region; the sequence is IQQLYGSPDG…ERPDQYGPNI (71 aa). The segment covering 328-337 has biased composition (pro residues); the sequence is PRPPQPPHPG. Hemopexin repeat units lie at residues 363–411, 412–457, 459–507, and 508–555; these read PNIC…WRGL, PGNI…GTDI, YDRI…QGIP, and TSPK…FMGC. A disulfide bond links Cys-366 and Cys-555. A glycan (N-linked (GlcNAc...) asparagine) is linked at Asn-414. The interval 561–599 is disordered; the sequence is PRSRWPDVARPPFNPNGGAEPEADGDSKEENAGDKDEGS. The segment covering 585–599 has biased composition (basic and acidic residues); it reads GDSKEENAGDKDEGS. The chain crosses the membrane as a helical span at residues 615–635; it reads VMVLVPLLLLLCILGLAFALV. The Cytoplasmic segment spans residues 636-657; sequence QMQRKGAPRMLLYCKRSLQEWV.

It belongs to the peptidase M10A family. The cofactor is Zn(2+). Requires Ca(2+) as cofactor. The precursor is cleaved by a furin endopeptidase.

The protein resides in the membrane. Its function is as follows. Endopeptidase that degrades various components of the extracellular matrix. May activate progelatinase A. The chain is Matrix metalloproteinase-15 (Mmp15) from Mus musculus (Mouse).